The primary structure comprises 232 residues: MIKNFLLSLSFISRLPLNINVNDFDRRVKKLPSFFPLVGYIVGSIYYLGALSNNLALKVFFLVLAFYFFDLFHFDGFLDTLDGFLNQSTKEKRLEIMSKGDVGPFAVFFGTLFVVVFWNLYLNANPFYFFISSTFGRYSMVLLMAFSKPAKKEGLGALFFPFEKKNLLISTIFTFFLIIFFKQYIISLTVTLITTYLISKIATSKIGGVTGDVLGGTCLFVNGLILLILEVV.

6 helical membrane-spanning segments follow: residues 31 to 51 (LPSFFPLVGYIVGSIYYLGAL), 59 to 79 (VFFLVLAFYFFDLFHFDGFLD), 102 to 122 (VGPFAVFFGTLFVVVFWNLYL), 126 to 146 (PFYFFISSTFGRYSMVLLMAF), 167 to 187 (LLISTIFTFFLIIFFKQYIIS), and 209 to 229 (VTGDVLGGTCLFVNGLILLIL).

Belongs to the CobS family. Mg(2+) is required as a cofactor.

The protein localises to the cell inner membrane. It carries out the reaction alpha-ribazole + adenosylcob(III)inamide-GDP = adenosylcob(III)alamin + GMP + H(+). It catalyses the reaction alpha-ribazole 5'-phosphate + adenosylcob(III)inamide-GDP = adenosylcob(III)alamin 5'-phosphate + GMP + H(+). The protein operates within cofactor biosynthesis; adenosylcobalamin biosynthesis; adenosylcobalamin from cob(II)yrinate a,c-diamide: step 7/7. Functionally, joins adenosylcobinamide-GDP and alpha-ribazole to generate adenosylcobalamin (Ado-cobalamin). Also synthesizes adenosylcobalamin 5'-phosphate from adenosylcobinamide-GDP and alpha-ribazole 5'-phosphate. The protein is Adenosylcobinamide-GDP ribazoletransferase of Thermosipho africanus (strain TCF52B).